We begin with the raw amino-acid sequence, 155 residues long: Cathelicidin-1 (155 aa).

The N-terminal stretch at 1–29 is a signal peptide; it reads METPRASLSLGRWSLWLLLLGLALPSASA. Pyrrolidone carboxylic acid is present on Gln30. Residues 30 to 143 constitute a propeptide that is removed on maturation; it reads QALSYREAVL…KQPWAPPQAA (114 aa). 3 disulfides stabilise this stretch: Cys85–Cys96, Cys107–Cys124, and Cys146–Cys154.

Belongs to the cathelicidin family. As to expression, large granules of neutrophils.

It is found in the secreted. Functionally, potent microbicidal activity; active against S.aureus and E.coli. The protein is Cathelicidin-1 (CATHL1) of Bos taurus (Bovine).